The primary structure comprises 1381 residues: MEVLMAERPTQVFHNKVIDGTAMKRLISRFIDHYGIGYTSHILDQVKTLGFRQATAASISLGIDDLLTIPSKRWLVQDAEQQSFILEKHHHYGNVHAVEKLRQSIEIWYATSEYLRQEMNPNFRMTDPFNPVHIMSFSGARGNASQVHQLVGMRGLMSDPQGQMIDLPIQSNLREGLSLTEYIISCYGARKGVVDTAIRTSDAGYLTRRLVEVVQHIVVRRTDCGTVRGISVSPRNGMMTDRIFIQTLIGRVLADDIYIGSRCIATRNQDIGVGLVSRFITFRAQPISIRTPFTCRSTSWICQLCYGRSPAHDDLVELGEAVGIIAGQSIGEPGTQLTLRTFHTGGVFTGGTAEHVRAPSNGKIKFNEDLVHPTRTRHGHPAFLCSRDLYVTIESEDIIHNVCIPPKSFLLVQNDQYVESEQVIAEIRARTSTLNLKEKVRKHIYSDSEGEMHWNTDVYHAPEFTYGNIHLLPKTSHLWILLGEPWRYSLGPCSIHKDQDQMNAYSLSVKPRYIANPSVTNNQVRHKFFSSYFSGKNQKGDRIPDCSELNRMTCTDHSNLRYPAILDGNSDLLAKRRRNRFIIPLESIQEGENQLIPSSGISMEIPRNGILRRNSILAYFDDPRYIRKSSGLTKYETRELNSIVNEENLIEYRGVKVFWPKYQKEVNPFFFIPVEVHILSESSSIMVRHNSIIGADTQITFNRRSRVGGLVRVKKKAEKMKLIIFSGDIHFPGKTNKAFRLIPPGGGKPNSKEYKKLKNWLYIQRMKLSRYEKKYFVLVQPVVPYKKTDGINLGRLFPPDLLQESDNLQLRVVNYILYYDPILEIWDTSIQLVRTSLVLNWDQDKKIEKACASFVEIRTNGLLRYFLRIDLAKSPISYTGKRNDLSGSGLISENGSDRANVNPFSSIYSYSKSRIKESLNPNQGTIHTLLNRNKESQSLIILSSSNCFRIGPFNDVKSPNVIKESIKKNPLIPIRNSLGPLGTGFPIYNFDLFSHLITHNQILVTNYLQLDNFKQIFQILKYYLLDENGQIYNPYSCSNIILNPFHLNWYFLHYNYCEETSPIVSLGQFLCENVCIAKKGPHLKSGQVLIVQVDSVVIRSAKPYLATPGATVHGHYGEILYEGDTLVTFIYEKSRSGDITQGLPKVEQVLEVRSIDSISMNLEKRIEGWNKSITRILGIPWAFLIGAELTIVQSRISLVNKVQKVYRSQGVQIHNRHIEIIVRQITSKVLVSEDEMSNVFSPGELIGLLRAERMGRALEEAICYQAVLLGITRASMNTQSFISEASFQETARVLAKAALLGRIDWLKGLKENVVLGGMIPVGSGFKTPSSEPNNIPNNIAFELQKKNLLEGEMKDILFYHRKLFDSCLSNNFHDTQEQSFF.

Residues Cys224, Cys295, Cys302, and Cys305 each contribute to the Zn(2+) site.

The protein belongs to the RNA polymerase beta' chain family. RpoC2 subfamily. As to quaternary structure, in plastids the minimal PEP RNA polymerase catalytic core is composed of four subunits: alpha, beta, beta', and beta''. When a (nuclear-encoded) sigma factor is associated with the core the holoenzyme is formed, which can initiate transcription. It depends on Zn(2+) as a cofactor.

The protein resides in the plastid. Its subcellular location is the chloroplast. It carries out the reaction RNA(n) + a ribonucleoside 5'-triphosphate = RNA(n+1) + diphosphate. Its function is as follows. DNA-dependent RNA polymerase catalyzes the transcription of DNA into RNA using the four ribonucleoside triphosphates as substrates. This Lactuca sativa (Garden lettuce) protein is DNA-directed RNA polymerase subunit beta''.